Consider the following 367-residue polypeptide: MASPCLIAVLVFLCAIVSCYSDNPIDSCWRGDSNWDQNRMKLADCAVGFGSSTMGGKGGDFYTVTSTDDNPVNPTPGTLRYGATREKALWIIFSQNMNIKLKMPLYVAGHKTIDGRGADVHLGNGGPCLFMRKVSHVILHSLHIHGCNTSVLGDVLVSESIGVEPVHAQDGDAITMRNVTNAWIDHNSLSDCSDGLIDVTLGSTGITISNNHFFNHHKVMLLGHDDTYDDDKSMKVTVAFNQFGPNAGQRMPRARYGLVHVANNNYDPWNIYAIGGSSNPTILSEGNSFTAPSESYKKEVTKRIGCESPSACANWVWRSTRDAFINGAYFVSSGKTEETNIYNSNEAFKVENGNAAPQLTKNAGVVT.

An N-terminal signal peptide occupies residues 1–21 (MASPCLIAVLVFLCAIVSCYS). The cysteines at positions 28 and 45 are disulfide-linked. The interval 38 to 305 (NRMKLADCAV…YKKEVTKRIG (268 aa)) is beta-helix. An igE-binding. Binds to IgE in 5 out of 7 patients tested region spans residues 92-104 (IFSQNMNIKLKMP). Cysteines 128 and 147 form a disulfide. Asn148 is a glycosylation site (N-linked (GlcNAc...) asparagine). A Ca(2+)-binding site is contributed by Asp170. Asn178 carries N-linked (GlcNAc...) asparagine glycosylation. 2 residues coordinate Ca(2+): Asp194 and Asp198. The igE-binding. Binds to IgE in 6 out of 7 patients tested stretch occupies residues 239–250 (AFNQFGPNAGQR). Arg250 is an active-site residue. Residues 251-258 (MPRARYGL) form an igE-binding. Binds to IgE in 5 out of 7 patients tested region. Cys306 and Cys312 are disulfide-bonded. Residues 317 to 327 (WRSTRDAFING) form an igE-binding. Binds to IgE in 3 out of 7 patients tested region.

The protein belongs to the polysaccharide lyase 1 family. Amb a subfamily. Ca(2+) serves as cofactor. Post-translationally, N-glycosylated; consists of complex-type N-glycans containing the Lewis a antigen (Galbeta1-3(Fucalpha1-4)GlcNAcbeta1-). Expressed in pollen (at protein level).

The enzyme catalyses Eliminative cleavage of (1-&gt;4)-alpha-D-galacturonan to give oligosaccharides with 4-deoxy-alpha-D-galact-4-enuronosyl groups at their non-reducing ends.. It functions in the pathway glycan metabolism; pectin degradation; 2-dehydro-3-deoxy-D-gluconate from pectin: step 2/5. Has low pectate lyase activity. This Juniperus ashei (Ozark white cedar) protein is Pectate lyase 1.